We begin with the raw amino-acid sequence, 544 residues long: Serine/threonine-protein kinase PAK 1 (544 aa).

The disordered stretch occupies residues 1–79 (MSNNGLDVQD…KERPEISLPS (79 aa)). Residue Ser-2 is modified to N-acetylserine. A Phosphoserine; by PKB and autocatalysis modification is found at Ser-21. Ser-57 is modified (phosphoserine; by autocatalysis). The segment covering 68–79 (KEKERPEISLPS) has biased composition (basic and acidic residues). Residues 70–140 (KERPEISLPS…YNSKKTSNSQ (71 aa)) form an autoregulatory region region. In terms of domain architecture, CRIB spans 75-88 (ISLPSDFEHTIHVG). Positions 75–105 (ISLPSDFEHTIHVGFDAVTGEFTGMPEQWAR) are GTPase-binding. A Phosphothreonine; by OXSR1 modification is found at Thr-84. A Phosphoserine modification is found at Ser-115. Residues Tyr-131 and Tyr-142 each carry the phosphotyrosine modification. A phosphoserine; by autocatalysis mark is found at Ser-144 and Ser-149. The span at 150–166 (AEDYNSSNTLNVKTVSE) shows a compositional bias: polar residues. Residues 150-195 (AEDYNSSNTLNVKTVSETPAVPPVSEDEDDDDDATPPPVIAPRPEH) are disordered. Tyr-153 is subject to Phosphotyrosine; by JAK2. Position 174 is a phosphoserine (Ser-174). The segment covering 174-183 (SEDEDDDDDA) has biased composition (acidic residues). Residue Thr-184 is modified to Phosphothreonine. A Phosphoserine; by autocatalysis modification is found at Ser-198. Tyr-200 is subject to Phosphotyrosine; by JAK2. Ser-203 is subject to Phosphoserine; by autocatalysis. The tract at residues 209–250 (PVTPTRDVATSPISPTENNTTPPDALTRNTEKQKKKPKMSDE) is disordered. A phosphothreonine mark is found at Thr-211 and Thr-218. A phosphoserine mark is found at Ser-219 and Ser-222. The segment covering 219–230 (SPISPTENNTTP) has biased composition (polar residues). Phosphothreonine is present on residues Thr-224, Thr-228, and Thr-229. Residues 269–520 (YTRFEKIGQG…AKELLQHQFL (252 aa)) enclose the Protein kinase domain. 275-283 (IGQGASGTV) contacts ATP. At Tyr-284 the chain carries Phosphotyrosine; by JAK2. Lys-298 contacts ATP. The active-site Proton acceptor is the Asp-388. Thr-422 bears the Phosphothreonine; by autocatalysis, BRSK2 and PDPK1 mark.

The protein belongs to the protein kinase superfamily. STE Ser/Thr protein kinase family. STE20 subfamily. Homodimer in its autoinhibited state. Active as monomer. Interacts with GIT1. Component of cytoplasmic complexes, which also contains PXN, ARHGEF7 and GIT1. Interacts with NISCH. Interacts with DVL1; mediates the formation of a DVL1, MUSK and PAK1 ternary complex involved in AChR clustering. Binds to the caspase-cleaved p110 isoform of CDC2L1 and CDC2L2, p110C, but not the full-length proteins. Interacts with ARHGEF7. Interacts with SCRIB. Interacts with PDPK1. Interacts (via kinase domain) with RAF1. Interacts with NCK1 and NCK2. Interacts with TBCB. Interacts with BRSK2. Interacts tightly with GTP-bound but not GDP-bound CDC42/P21 and RAC1. Interacts with SNAI1. Interacts with CIB1 (via N-terminal region); the interaction is direct, promotes PAK1 activity and occurs in a calcium-dependent manner. Interacts with INPP5K. Interacts with gamma-tubulin. Interacts with RHOU; the interaction promotes PAK1 activation. Mg(2+) is required as a cofactor. In terms of processing, autophosphorylated in trans, meaning that in a dimer, one kinase molecule phosphorylates the other one. Activated by autophosphorylation at Thr-422 in response to a conformation change, triggered by interaction with GTP-bound CDC42 or RAC1. Activated by phosphorylation at Thr-422 by PDPK1. Phosphorylated by JAK2 in response to PRL; this increases PAK1 kinase activity. Phosphorylated at Ser-21 by PKB/AKT; this reduces interaction with NCK1 and association with focal adhesion sites. Activated by phosphorylation at Thr-422 by BRSK2. Upon DNA damage, phosphorylated at Thr-211 and translocates to the nucleoplasm. Phosphorylated at tyrosine residues, which can be enhanced by NTN1. In terms of tissue distribution, expressed predominantly in the brain, with higher expression in neuronal groups associated with motor function, and at lower levels in the spleen.

Its subcellular location is the cytoplasm. It is found in the cell junction. The protein resides in the focal adhesion. The protein localises to the cell projection. It localises to the lamellipodium. Its subcellular location is the cell membrane. It is found in the ruffle membrane. The protein resides in the invadopodium. The protein localises to the nucleus. It localises to the nucleoplasm. Its subcellular location is the chromosome. It is found in the cytoskeleton. The protein resides in the microtubule organizing center. The protein localises to the centrosome. It carries out the reaction L-seryl-[protein] + ATP = O-phospho-L-seryl-[protein] + ADP + H(+). The enzyme catalyses L-threonyl-[protein] + ATP = O-phospho-L-threonyl-[protein] + ADP + H(+). Its activity is regulated as follows. Phosphorylation of Thr-84 by OXSR1 inhibits activation. Activated by binding small G proteins. Binding of GTP-bound CDC42 or RAC1 to the autoregulatory region releases monomers from the autoinhibited dimer, and enables activation by phosphorylation of Thr-422. Protein kinase involved in intracellular signaling pathways downstream of integrins and receptor-type kinases that plays an important role in cytoskeleton dynamics, in cell adhesion, migration, proliferation, apoptosis, mitosis, and in vesicle-mediated transport processes. Can directly phosphorylate BAD and protects cells against apoptosis. Activated by interaction with CDC42 and RAC1. Functions as a GTPase effector that links the Rho-related GTPases CDC42 and RAC1 to the JNK MAP kinase pathway. Phosphorylates and activates MAP2K1, and thereby mediates activation of downstream MAP kinases. Involved in the reorganization of the actin cytoskeleton, actin stress fibers and of focal adhesion complexes. Phosphorylates the tubulin chaperone TBCB and thereby plays a role in the regulation of microtubule biogenesis and organization of the tubulin cytoskeleton. Plays a role in the regulation of insulin secretion in response to elevated glucose levels. Part of a ternary complex that contains PAK1, DVL1 and MUSK that is important for MUSK-dependent regulation of AChR clustering during the formation of the neuromuscular junction (NMJ). Activity is inhibited in cells undergoing apoptosis, potentially due to binding of CDC2L1 and CDC2L2. Phosphorylates MYL9/MLC2. Phosphorylates RAF1 at 'Ser-338' and 'Ser-339' resulting in: activation of RAF1, stimulation of RAF1 translocation to mitochondria, phosphorylation of BAD by RAF1, and RAF1 binding to BCL2. Phosphorylates SNAI1 at 'Ser-246' promoting its transcriptional repressor activity by increasing its accumulation in the nucleus. In podocytes, promotes NR3C2 nuclear localization. Required for atypical chemokine receptor ACKR2-induced phosphorylation of LIMK1 and cofilin (CFL1) and for the up-regulation of ACKR2 from endosomal compartment to cell membrane, increasing its efficiency in chemokine uptake and degradation. In synapses, seems to mediate the regulation of F-actin cluster formation performed by SHANK3, maybe through CFL1 phosphorylation and inactivation. Plays a role in RUFY3-mediated facilitating gastric cancer cells migration and invasion. In response to DNA damage, phosphorylates MORC2 which activates its ATPase activity and facilitates chromatin remodeling. In neurons, plays a crucial role in regulating GABA(A) receptor synaptic stability and hence GABAergic inhibitory synaptic transmission through its role in F-actin stabilization. In hippocampal neurons, necessary for the formation of dendritic spines and excitatory synapses; this function is dependent on kinase activity and may be exerted by the regulation of actomyosin contractility through the phosphorylation of myosin II regulatory light chain (MLC). Along with GIT1, positively regulates microtubule nucleation during interphase. Phosphorylates FXR1, promoting its localization to stress granules and activity. Phosphorylates ILK on 'Thr-173' and 'Ser-246', promoting nuclear export of ILK. The chain is Serine/threonine-protein kinase PAK 1 from Rattus norvegicus (Rat).